A 472-amino-acid polypeptide reads, in one-letter code: 4-aminobutyrate aminotransferase (472 aa).

135–136 (GA) provides a ligand contact to pyridoxal 5'-phosphate. Arginine 193 is a substrate binding site. An N6-(pyridoxal phosphate)lysine modification is found at lysine 327. Threonine 352 serves as a coordination point for pyridoxal 5'-phosphate.

It belongs to the class-III pyridoxal-phosphate-dependent aminotransferase family. As to quaternary structure, homodimer and homotetramer. It depends on pyridoxal 5'-phosphate as a cofactor.

It localises to the cytoplasm. It carries out the reaction 4-aminobutanoate + 2-oxoglutarate = succinate semialdehyde + L-glutamate. Its pathway is amino-acid degradation; L-arginine degradation. In terms of biological role, required for the degradation of gamma-aminobutyric acid (GABA), which is important for utilization of GABA as nitrogen source and for oxidative stress tolerance. Deaminates GABA to succinate semialdehyde, which in turn is converted to succinate by the succinate-semialdehyde dehydrogenase UGA2. May be involved in an alternative, arginase-independent arginine degradation pathway via GABA. The sequence is that of 4-aminobutyrate aminotransferase from Kluyveromyces lactis (strain ATCC 8585 / CBS 2359 / DSM 70799 / NBRC 1267 / NRRL Y-1140 / WM37) (Yeast).